A 276-amino-acid chain; its full sequence is NADPH-dependent 7-cyano-7-deazaguanine reductase (276 aa).

Substrate is bound at residue 83–85 (IES). 85–86 (SK) is an NADPH binding site. Catalysis depends on C184, which acts as the Thioimide intermediate. D191 (proton donor) is an active-site residue. Position 223-224 (223-224 (HE)) interacts with substrate. 252 to 253 (RG) contacts NADPH.

This sequence belongs to the GTP cyclohydrolase I family. QueF type 2 subfamily. Homodimer.

It localises to the cytoplasm. It carries out the reaction 7-aminomethyl-7-carbaguanine + 2 NADP(+) = 7-cyano-7-deazaguanine + 2 NADPH + 3 H(+). It functions in the pathway tRNA modification; tRNA-queuosine biosynthesis. Its function is as follows. Catalyzes the NADPH-dependent reduction of 7-cyano-7-deazaguanine (preQ0) to 7-aminomethyl-7-deazaguanine (preQ1). This chain is NADPH-dependent 7-cyano-7-deazaguanine reductase, found in Pseudomonas aeruginosa (strain LESB58).